A 171-amino-acid chain; its full sequence is Thioredoxin-2 (171 aa).

Residues 41-169 form the Thioredoxin domain; it reads AFNASPSTSQ…LQALISANHP (129 aa). An intrachain disulfide couples C95 to C98.

The protein belongs to the thioredoxin family.

The protein localises to the cytoplasm. The protein resides in the vacuole. In terms of biological role, thioredoxin involved in responses to oxidative and cell wall stresses. Plays an important role in appressorium formation on hyphal tips. TRX2 may affect invasive growth via the MST11-MST7-PMK1 pathway since it is required for the proper folding or dimerization of MAPKK MST7. In Pyricularia oryzae (strain 70-15 / ATCC MYA-4617 / FGSC 8958) (Rice blast fungus), this protein is Thioredoxin-2.